We begin with the raw amino-acid sequence, 480 residues long: Aspartyl/glutamyl-tRNA(Asn/Gln) amidotransferase subunit B (480 aa).

It belongs to the GatB/GatE family. GatB subfamily. Heterotrimer of A, B and C subunits.

The enzyme catalyses L-glutamyl-tRNA(Gln) + L-glutamine + ATP + H2O = L-glutaminyl-tRNA(Gln) + L-glutamate + ADP + phosphate + H(+). It carries out the reaction L-aspartyl-tRNA(Asn) + L-glutamine + ATP + H2O = L-asparaginyl-tRNA(Asn) + L-glutamate + ADP + phosphate + 2 H(+). Its function is as follows. Allows the formation of correctly charged Asn-tRNA(Asn) or Gln-tRNA(Gln) through the transamidation of misacylated Asp-tRNA(Asn) or Glu-tRNA(Gln) in organisms which lack either or both of asparaginyl-tRNA or glutaminyl-tRNA synthetases. The reaction takes place in the presence of glutamine and ATP through an activated phospho-Asp-tRNA(Asn) or phospho-Glu-tRNA(Gln). The chain is Aspartyl/glutamyl-tRNA(Asn/Gln) amidotransferase subunit B from Streptococcus pneumoniae serotype 2 (strain D39 / NCTC 7466).